A 424-amino-acid polypeptide reads, in one-letter code: Tol-Pal system protein TolB (424 aa).

Residues 1 to 24 (MNKARAIARWISFLLLIAAGQVCA) form the signal peptide.

It belongs to the TolB family. In terms of assembly, the Tol-Pal system is composed of five core proteins: the inner membrane proteins TolA, TolQ and TolR, the periplasmic protein TolB and the outer membrane protein Pal. They form a network linking the inner and outer membranes and the peptidoglycan layer.

The protein resides in the periplasm. In terms of biological role, part of the Tol-Pal system, which plays a role in outer membrane invagination during cell division and is important for maintaining outer membrane integrity. This chain is Tol-Pal system protein TolB, found in Methylococcus capsulatus (strain ATCC 33009 / NCIMB 11132 / Bath).